The following is a 372-amino-acid chain: Neuropeptide S receptor (372 aa).

The Extracellular segment spans residues 1–52 (MPANLTEGSFHANQTVPMLDSSPVACTEIVTFTEALEAEEWGSFYSSFKTEQ). Residues asparagine 4 and asparagine 13 are each glycosylated (N-linked (GlcNAc...) asparagine). The chain crosses the membrane as a helical span at residues 53 to 73 (LITLWVLFVFTIVGNSVVLFS). Residues 74–82 (TWRRKRKSR) lie on the Cytoplasmic side of the membrane. Residues 83–103 (MTFFVTQLAITDSFTGLINIL) traverse the membrane as a helical segment. At 104-122 (TDIIWRFTGDFMAPDLVCR) the chain is on the extracellular side. Cysteine 121 and cysteine 198 are joined by a disulfide. A helical membrane pass occupies residues 123–143 (IVRYLQVVLLYASTYVLVSLS). Residues 144–165 (IDRYHAIVYPMKFLQGAEKQAK) lie on the Cytoplasmic side of the membrane. Residues 166–186 (VLIGIAWSLSFLFSIPTLIIF) form a helical membrane-spanning segment. At 187-213 (GKRTLSNGEVQCWALWPDDSYWTPYMT) the chain is on the extracellular side. A helical membrane pass occupies residues 214-234 (IVAFLVYFIPLTIISVIYGLV). Topologically, residues 235–276 (IRTIWIKSKAHETVISNCSDGELCCSYNRGLISKAKIKAIKY) are cytoplasmic. A helical membrane pass occupies residues 277-297 (SIVIILAFICCWSPYFLFDML). At 298–313 (DNFNLLPDTKERFYAS) the chain is on the extracellular side. Residues 314 to 334 (VIIQNLPALNSAINPLIYCIF) form a helical membrane-spanning segment. Topologically, residues 335 to 372 (SGSLCSPCKVQRSQDSRMTYRERSERHEMQILSKPEFI) are cytoplasmic.

The protein belongs to the G-protein coupled receptor 1 family. Vasopressin/oxytocin receptor subfamily.

It localises to the cell membrane. Functionally, G-protein coupled receptor for neuropeptide S (NPS). Promotes mobilization of intracellular Ca(2+) stores. Inhibits cell growth in response to NPS binding. Involved in pathogenesis of asthma and other IgE-mediated diseases. This Rattus norvegicus (Rat) protein is Neuropeptide S receptor (Npsr1).